The following is a 366-amino-acid chain: Cobalt-precorrin-5B C(1)-methyltransferase (366 aa).

The protein belongs to the CbiD family.

It catalyses the reaction Co-precorrin-5B + S-adenosyl-L-methionine = Co-precorrin-6A + S-adenosyl-L-homocysteine. The protein operates within cofactor biosynthesis; adenosylcobalamin biosynthesis; cob(II)yrinate a,c-diamide from sirohydrochlorin (anaerobic route): step 6/10. In terms of biological role, catalyzes the methylation of C-1 in cobalt-precorrin-5B to form cobalt-precorrin-6A. This Pseudomonas paraeruginosa (strain DSM 24068 / PA7) (Pseudomonas aeruginosa (strain PA7)) protein is Cobalt-precorrin-5B C(1)-methyltransferase.